A 32-amino-acid chain; its full sequence is PGATLQXAXXLLVAVXAXPPPPLGVXPKPXPG.

Belongs to the glycosyltransferase 7 family. Requires Mn(2+) as cofactor. Post-translationally, the soluble form derives from the membrane form by proteolytic processing.

It localises to the golgi apparatus. The protein localises to the golgi stack membrane. It is found in the secreted. Its subcellular location is the cell membrane. The protein resides in the cell projection. It localises to the filopodium. It catalyses the reaction D-glucose + UDP-alpha-D-galactose = lactose + UDP + H(+). The catalysed reaction is an N-acetyl-beta-D-glucosaminyl derivative + UDP-alpha-D-galactose = a beta-D-galactosyl-(1-&gt;4)-N-acetyl-beta-D-glucosaminyl derivative + UDP + H(+). The enzyme catalyses N-acetyl-D-glucosamine + UDP-alpha-D-galactose = beta-D-galactosyl-(1-&gt;4)-N-acetyl-D-glucosamine + UDP + H(+). It carries out the reaction a beta-D-GlcNAc-(1-&gt;3)-beta-D-Gal-(1-&gt;4)-beta-D-Glc-(1&lt;-&gt;1)-Cer(d18:1(4E)) + UDP-alpha-D-galactose = a neolactoside nLc4Cer(d18:1(4E)) + UDP + H(+). It catalyses the reaction a beta-D-glucosylceramide + UDP-alpha-D-galactose = a beta-D-galactosyl-(1-&gt;4)-beta-D-glucosyl-(1&lt;-&gt;1)-ceramide + UDP + H(+). The catalysed reaction is a neolactoside IV(3)-beta-GlcNAc-nLc4Cer + UDP-alpha-D-galactose = a neolactoside nLc6Cer + UDP + H(+). It participates in protein modification; protein glycosylation. Functionally, this protein is responsible for the synthesis of complex-type N-linked oligosaccharides in many glycoproteins as well as the carbohydrate moieties of glycolipids. The polypeptide is Beta-1,4-galactosyltransferase 1 (Rattus norvegicus (Rat)).